The primary structure comprises 187 residues: Ribosome maturation factor RimM (187 aa).

The 93-residue stretch at 91–183 folds into the PRC barrel domain; the sequence is DDGFYDHELE…ILVLTPPEGL (93 aa).

Belongs to the RimM family. Binds ribosomal protein uS19.

It is found in the cytoplasm. In terms of biological role, an accessory protein needed during the final step in the assembly of 30S ribosomal subunit, possibly for assembly of the head region. Essential for efficient processing of 16S rRNA. May be needed both before and after RbfA during the maturation of 16S rRNA. It has affinity for free ribosomal 30S subunits but not for 70S ribosomes. In Corynebacterium jeikeium (strain K411), this protein is Ribosome maturation factor RimM.